Consider the following 489-residue polypeptide: Probable capsid protein (489 aa).

Over residues Arg87–Gln101 the composition is skewed to basic and acidic residues. Positions Arg87–Ile111 are disordered. Residues Arg107–Lys110 carry the Nuclear localization signal motif. The CCHC-type zinc-finger motif lies at Cys409 to Asn426. The segment at Glu466–Phe489 is disordered.

The protein belongs to the caulimoviridae capsid protein family. In terms of assembly, interacts (via nuclear localization signal) with host importin alpha.

Its subcellular location is the virion. It localises to the host nucleus. Its function is as follows. Self assembles to form an icosahedral capsid, about 50 nm in diameter, nm, composed of 420 subunits of the viral capsid protein. The capsid encapsulates the genomic dsDNA. Following virus entry into host cell, provides nuclear import of the viral genome. Virus particles do not enter the nucleus, but dock at the nuclear membrane through the interaction with host importins. This is Probable capsid protein from Scrophularia californica (California bee plant).